The sequence spans 813 residues: Calpain-7 (813 aa).

An N-acetylmethionine modification is found at Met-1. Thr-95 carries the phosphothreonine modification. The Calpain catalytic domain occupies Arg-232–Pro-540. Catalysis depends on residues Cys-290, His-458, and Asn-478. A domain III region spans residues Gly-541–Ala-701. Residues Gly-702–Gln-813 form a domain N region.

This sequence belongs to the peptidase C2 family.

It localises to the nucleus. Calcium-regulated non-lysosomal thiol-protease. The protein is Calpain-7 (CAPN7) of Sus scrofa (Pig).